A 920-amino-acid polypeptide reads, in one-letter code: Isoleucine--tRNA ligase (920 aa).

Positions P57–H67 match the 'HIGH' region motif. E560 lines the L-isoleucyl-5'-AMP pocket. A 'KMSKS' region motif is present at residues K601–S605. K604 lines the ATP pocket. Zn(2+)-binding residues include C890, C893, C910, and C913.

It belongs to the class-I aminoacyl-tRNA synthetase family. IleS type 1 subfamily. In terms of assembly, monomer. Requires Zn(2+) as cofactor.

Its subcellular location is the cytoplasm. It carries out the reaction tRNA(Ile) + L-isoleucine + ATP = L-isoleucyl-tRNA(Ile) + AMP + diphosphate. In terms of biological role, catalyzes the attachment of isoleucine to tRNA(Ile). As IleRS can inadvertently accommodate and process structurally similar amino acids such as valine, to avoid such errors it has two additional distinct tRNA(Ile)-dependent editing activities. One activity is designated as 'pretransfer' editing and involves the hydrolysis of activated Val-AMP. The other activity is designated 'posttransfer' editing and involves deacylation of mischarged Val-tRNA(Ile). This chain is Isoleucine--tRNA ligase, found in Caldicellulosiruptor bescii (strain ATCC BAA-1888 / DSM 6725 / KCTC 15123 / Z-1320) (Anaerocellum thermophilum).